We begin with the raw amino-acid sequence, 186 residues long: uncharacterized protein (186 aa).

Disordered stretches follow at residues 17–47 (LSGESEEDLAEERENPALVGSETAEPTEETF), 77–105 (EDKLLPSEPCADHPLAARPPSQAAAAAEA), and 121–164 (QQAA…PVAG). Residues 90 to 105 (PLAARPPSQAAAAAEA) are compositionally biased toward low complexity. Over residues 136 to 149 (PEPDPEPADEAAEE) the composition is skewed to acidic residues.

This is an uncharacterized protein from Homo sapiens (Human).